An 85-amino-acid polypeptide reads, in one-letter code: Neurotoxin 60.35 (85 aa).

Residues 1 to 23 (MKFCVAVSLLIIASMAGVISVSG) form the signal peptide. The 62-residue stretch at 24 to 85 (YDVYPRDYAG…NFLSVIWKQC (62 aa)) folds into the LCN-type CS-alpha/beta domain. Disulfide bonds link C38–C60, C46–C65, and C50–C67.

Belongs to the long (3 C-C) scorpion toxin superfamily. In terms of tissue distribution, expressed by the venom gland.

It localises to the secreted. In Lychas mucronatus (Chinese swimming scorpion), this protein is Neurotoxin 60.35.